A 337-amino-acid polypeptide reads, in one-letter code: Eukaryotic translation initiation factor 3 subunit H (337 aa).

Residues valine 21–alanine 153 form the MPN domain.

This sequence belongs to the eIF-3 subunit H family. As to quaternary structure, component of the eukaryotic translation initiation factor 3 (eIF-3) complex. The eIF-3 complex interacts with pix. Interacts with mxt.

Its subcellular location is the cytoplasm. In terms of biological role, component of the eukaryotic translation initiation factor 3 (eIF-3) complex, which is involved in protein synthesis of a specialized repertoire of mRNAs and, together with other initiation factors, stimulates binding of mRNA and methionyl-tRNAi to the 40S ribosome. The eIF-3 complex specifically targets and initiates translation of a subset of mRNAs involved in cell proliferation. The polypeptide is Eukaryotic translation initiation factor 3 subunit H (Drosophila pseudoobscura pseudoobscura (Fruit fly)).